Reading from the N-terminus, the 122-residue chain is Large ribosomal subunit protein uL14c (122 aa).

The protein belongs to the universal ribosomal protein uL14 family. Part of the 50S ribosomal subunit.

The protein localises to the plastid. Its subcellular location is the chloroplast. Functionally, binds to 23S rRNA. The chain is Large ribosomal subunit protein uL14c from Coffea arabica (Arabian coffee).